The following is a 39-amino-acid chain: Hementin (39 aa).

A divalent metal cation is required as a cofactor. Expressed mainly in the posterior salivary glands and, to a lesser extent, in the anterior salivary glands and secreted into the proboscis (at protein level).

It localises to the secreted. Inhibited by EDTA, cysteine, DTT and sodium phosphate. Partially inhibited by EGTA, citrate, Tris and glycine. Not inhibited by DFP, PMSF, iodoacetic acid and leupeptin. Requires sodium chloride concentrations higher than 0.15 M for activity. Its function is as follows. Metalloprotease with anticoagulant activity. Cleaves fibrinogen Aalpha (FGA), gamma (FGG) and Bbeta (FGB) chains after positions 'Asn-121', 'Lys-160' and 'Pro-102', respectively. Breaks down cross-linked and non-cross-linked fibrin clots. Prevents and reverts platelet aggregation induced by ADP and collagen. Prevents thrombin-induced platelet clotting. Does not affect plasma levels of coagulation factors prothrombin (F2), V (F5), VII (F7), VIII (F8), IX (F9), X (F10), XI (F11), XII (F12), plasma kallikrein (KLKB1) and kininogen-1 (KNG1). The chain is Hementin from Haementeria ghilianii (Amazon leech).